Reading from the N-terminus, the 386-residue chain is Succinyl-diaminopimelate desuccinylase (386 aa).

Histidine 77 contributes to the Zn(2+) binding site. Aspartate 79 is a catalytic residue. Aspartate 110 is a Zn(2+) binding site. Glutamate 144 acts as the Proton acceptor in catalysis. Residues glutamate 145, glutamate 173, and histidine 359 each coordinate Zn(2+).

Belongs to the peptidase M20A family. DapE subfamily. In terms of assembly, homodimer. Zn(2+) serves as cofactor. Co(2+) is required as a cofactor.

The catalysed reaction is N-succinyl-(2S,6S)-2,6-diaminopimelate + H2O = (2S,6S)-2,6-diaminopimelate + succinate. Its pathway is amino-acid biosynthesis; L-lysine biosynthesis via DAP pathway; LL-2,6-diaminopimelate from (S)-tetrahydrodipicolinate (succinylase route): step 3/3. Catalyzes the hydrolysis of N-succinyl-L,L-diaminopimelic acid (SDAP), forming succinate and LL-2,6-diaminopimelate (DAP), an intermediate involved in the bacterial biosynthesis of lysine and meso-diaminopimelic acid, an essential component of bacterial cell walls. The polypeptide is Succinyl-diaminopimelate desuccinylase (Methylibium petroleiphilum (strain ATCC BAA-1232 / LMG 22953 / PM1)).